The primary structure comprises 759 residues: Arylphorin subunit A4 (759 aa).

An N-terminal signal peptide occupies residues 1-16 (MKIAIVLLAIIALVAA).

The protein belongs to the hemocyanin family. As to quaternary structure, heterohexamer. Fat body.

Its subcellular location is the secreted. The protein resides in the extracellular space. Arylphorin is a larval storage protein (LSP) which may serve as a storage protein used primarily as a source of aromatic amino acids for protein synthesis during metamorphosis. It is a constituent of the sclerotizing system of the cuticle, and serves as a carrier for ecdysteroid hormone. The sequence is that of Arylphorin subunit A4 from Calliphora vicina (Blue blowfly).